The sequence spans 445 residues: 3-phosphoshikimate 1-carboxyvinyltransferase (445 aa).

Residues 1–25 (MSHSDQTSPLEARKSAALSGTARVP) form a disordered region. Lysine 28, serine 29, and arginine 33 together coordinate 3-phosphoshikimate. Lysine 28 contributes to the phosphoenolpyruvate binding site. Phosphoenolpyruvate is bound by residues glycine 101 and arginine 129. Residues serine 175, glutamine 177, aspartate 328, and lysine 355 each contribute to the 3-phosphoshikimate site. Glutamine 177 contributes to the phosphoenolpyruvate binding site. Aspartate 328 acts as the Proton acceptor in catalysis. Phosphoenolpyruvate-binding residues include arginine 359 and arginine 402.

This sequence belongs to the EPSP synthase family. As to quaternary structure, monomer.

It is found in the cytoplasm. The enzyme catalyses 3-phosphoshikimate + phosphoenolpyruvate = 5-O-(1-carboxyvinyl)-3-phosphoshikimate + phosphate. The protein operates within metabolic intermediate biosynthesis; chorismate biosynthesis; chorismate from D-erythrose 4-phosphate and phosphoenolpyruvate: step 6/7. Catalyzes the transfer of the enolpyruvyl moiety of phosphoenolpyruvate (PEP) to the 5-hydroxyl of shikimate-3-phosphate (S3P) to produce enolpyruvyl shikimate-3-phosphate and inorganic phosphate. In Rhodopseudomonas palustris (strain BisB5), this protein is 3-phosphoshikimate 1-carboxyvinyltransferase.